A 264-amino-acid chain; its full sequence is Elongation factor Ts (264 aa).

An involved in Mg(2+) ion dislocation from EF-Tu region spans residues 76–79; the sequence is TDFV.

This sequence belongs to the EF-Ts family.

The protein localises to the cytoplasm. Associates with the EF-Tu.GDP complex and induces the exchange of GDP to GTP. It remains bound to the aminoacyl-tRNA.EF-Tu.GTP complex up to the GTP hydrolysis stage on the ribosome. This is Elongation factor Ts from Deinococcus radiodurans (strain ATCC 13939 / DSM 20539 / JCM 16871 / CCUG 27074 / LMG 4051 / NBRC 15346 / NCIMB 9279 / VKM B-1422 / R1).